A 670-amino-acid polypeptide reads, in one-letter code: MADLSQQSKARVEALRREINHHNYQYYVLDQPTITDAQYDQLMQELLRLEERHPELVTPDSPTQRVGGQVQRGFSSVPHKIPMLSLGNAFGEGDLREFDRRVRSYLPGEEVKYVVELKIDGLAISLWYEKGLLVRGATRGDGELGEDITINLKTIRAIPLRLTQEVPFLEVRGEAYMPKDSFVRLNEAREEAGEPLFANPRNAAAGSLRQLDPKITAARNLSVFMYAIGYIEGAKPPSHAESLAWLKELGIRINPDHQVCGSIDEVIDFISQWQAKRYQLPYAIDGMVIKVNSLEQQQRLGTTMKSPRWAIAYKFPAEQAVSTIKDIIIRVGRTGVLTPTAILEPVQLAGTTVSKATLHNEDIIRQKDIRIGDKALVQKAGDIIPEIVQVYPEKRTGNEVPFILPVTCPECGAEVVRVAGEAAHRCTNENCSAKSREGIIHFVSRSAMDIMGLGEGIVNQLIKGGLVKDPADLYDLKYEDLIRQERMGARSSQKLLAAIEASKNNSLGQLLFGLGIRHVGERAAKILARQFGSMQALMQATAEDLTGISEIGPRIAESIMEYFSRQENQGLIERLSKAGVNMLEEVEQTESTDQTLSGKTFVVTGTLEGFSRQEAQRAIEERGGKVSGSVSKKTNYVVVGENPGSKHDKARQLGITILTEQDFVKLLQQQ.

NAD(+)-binding positions include 36–40 (DAQYD), 85–86 (SL), and Glu116. Lys118 serves as the catalytic N6-AMP-lysine intermediate. 4 residues coordinate NAD(+): Arg139, Glu174, Lys290, and Lys314. Cys408, Cys411, Cys426, and Cys431 together coordinate Zn(2+). One can recognise a BRCT domain in the interval 591-670 (STDQTLSGKT…QDFVKLLQQQ (80 aa)).

Belongs to the NAD-dependent DNA ligase family. LigA subfamily. The cofactor is Mg(2+). Mn(2+) serves as cofactor.

The catalysed reaction is NAD(+) + (deoxyribonucleotide)n-3'-hydroxyl + 5'-phospho-(deoxyribonucleotide)m = (deoxyribonucleotide)n+m + AMP + beta-nicotinamide D-nucleotide.. In terms of biological role, DNA ligase that catalyzes the formation of phosphodiester linkages between 5'-phosphoryl and 3'-hydroxyl groups in double-stranded DNA using NAD as a coenzyme and as the energy source for the reaction. It is essential for DNA replication and repair of damaged DNA. This chain is DNA ligase, found in Desulforamulus reducens (strain ATCC BAA-1160 / DSM 100696 / MI-1) (Desulfotomaculum reducens).